The chain runs to 290 residues: Undecaprenyl-diphosphatase (290 aa).

8 helical membrane passes run 1–21 (MFLL…LTEF), 48–68 (SAFT…AWVF), 101–121 (IHVL…DDLI), 125–145 (LFSV…MIIA), 161–181 (INYF…WPGF), 202–222 (SDFT…LSLL), 231–251 (AHIP…LIAI), and 266–286 (FAIY…GFGI).

It belongs to the UppP family.

It localises to the cell membrane. It carries out the reaction di-trans,octa-cis-undecaprenyl diphosphate + H2O = di-trans,octa-cis-undecaprenyl phosphate + phosphate + H(+). Functionally, catalyzes the dephosphorylation of undecaprenyl diphosphate (UPP). Confers resistance to bacitracin. This is Undecaprenyl-diphosphatase from Staphylococcus epidermidis (strain ATCC 35984 / DSM 28319 / BCRC 17069 / CCUG 31568 / BM 3577 / RP62A).